Consider the following 435-residue polypeptide: MSNSEFKSLGCSKWLVEALNAMKIVQPTAIQKACIPEILKGRDCIGGANTGSGKTIAFAAPMLTKWSEDPQGMFGIVLTPTRELAMQIAEQFTAFGSAMNIRVAIVVGGESIVQQAIELQKRPHFIIATPGRLAHHVLNSGEDTIGGLKRVKFLVLDEADILLTETFSKDLATCVSILPPKNKRQNLLFTATMTDQVKALSDAPQTEGKPPVFTFEVESVDNVAIPKTLETTYLLVPEHVKESYLYQILTSEKYVKSSCIIFVNRTVTAEILRRTLKSLDVRVTSLHSQMPQQERTNSVQRFRAQAARVLIATDVASRGLDIPIVELVVNYDIPGNPDTFIHRAGRTARAGRHGESLCFVTEKDIQRVEAIEERINKKMEEFTDVGDTAVIRKSLTKVTAAKRESLMAMDKEGFGERRKLQKRKNESKEKTHRRT.

The Q motif signature appears at 4 to 32 (SEFKSLGCSKWLVEALNAMKIVQPTAIQK). The Helicase ATP-binding domain maps to 35 to 211 (IPEILKGRDC…DAPQTEGKPP (177 aa)). Residue 48-55 (ANTGSGKT) coordinates ATP. The short motif at 157–160 (DEAD) is the DEAD box element. Residues 244 to 391 (YLYQILTSEK…FTDVGDTAVI (148 aa)) form the Helicase C-terminal domain. A compositionally biased stretch (basic and acidic residues) spans 409–429 (MDKEGFGERRKLQKRKNESKE). The disordered stretch occupies residues 409–435 (MDKEGFGERRKLQKRKNESKEKTHRRT).

Belongs to the DEAD box helicase family. DDX49/DBP8 subfamily.

It is found in the nucleus. Its subcellular location is the nucleolus. It carries out the reaction ATP + H2O = ADP + phosphate + H(+). Functionally, ATP-binding RNA helicase involved in 40S ribosomal subunit biogenesis and is required for the normal formation of 18S rRNAs through pre-rRNA processing at A0, A1 and A2 sites. Required for vegetative growth. The protein is ATP-dependent RNA helicase DBP8 (DBP8) of Kluyveromyces lactis (strain ATCC 8585 / CBS 2359 / DSM 70799 / NBRC 1267 / NRRL Y-1140 / WM37) (Yeast).